The following is a 922-amino-acid chain: DNA gyrase subunit A (922 aa).

Residues Met1–Ser14 are compositionally biased toward low complexity. The segment at Met1 to Glu24 is disordered. The region spanning Leu49–Leu518 is the Topo IIA-type catalytic domain. Tyr137 (O-(5'-phospho-DNA)-tyrosine intermediate) is an active-site residue. Positions Gln545 to Gly551 match the GyrA-box motif. The interval Glu861–Gly922 is disordered. 2 stretches are compositionally biased toward acidic residues: residues Asn863–Ala890 and Asp912–Gly922.

This sequence belongs to the type II topoisomerase GyrA/ParC subunit family. As to quaternary structure, heterotetramer, composed of two GyrA and two GyrB chains. In the heterotetramer, GyrA contains the active site tyrosine that forms a transient covalent intermediate with DNA, while GyrB binds cofactors and catalyzes ATP hydrolysis.

The protein localises to the cytoplasm. It catalyses the reaction ATP-dependent breakage, passage and rejoining of double-stranded DNA.. In terms of biological role, a type II topoisomerase that negatively supercoils closed circular double-stranded (ds) DNA in an ATP-dependent manner to modulate DNA topology and maintain chromosomes in an underwound state. Negative supercoiling favors strand separation, and DNA replication, transcription, recombination and repair, all of which involve strand separation. Also able to catalyze the interconversion of other topological isomers of dsDNA rings, including catenanes and knotted rings. Type II topoisomerases break and join 2 DNA strands simultaneously in an ATP-dependent manner. This is DNA gyrase subunit A from Nocardioides sp. (strain ATCC BAA-499 / JS614).